Reading from the N-terminus, the 367-residue chain is 4-hydroxy-3-methylbut-2-en-1-yl diphosphate synthase (flavodoxin) (367 aa).

Cys-270, Cys-273, Cys-305, and Glu-312 together coordinate [4Fe-4S] cluster.

This sequence belongs to the IspG family. [4Fe-4S] cluster is required as a cofactor.

It catalyses the reaction (2E)-4-hydroxy-3-methylbut-2-enyl diphosphate + oxidized [flavodoxin] + H2O + 2 H(+) = 2-C-methyl-D-erythritol 2,4-cyclic diphosphate + reduced [flavodoxin]. It functions in the pathway isoprenoid biosynthesis; isopentenyl diphosphate biosynthesis via DXP pathway; isopentenyl diphosphate from 1-deoxy-D-xylulose 5-phosphate: step 5/6. Functionally, converts 2C-methyl-D-erythritol 2,4-cyclodiphosphate (ME-2,4cPP) into 1-hydroxy-2-methyl-2-(E)-butenyl 4-diphosphate. The sequence is that of 4-hydroxy-3-methylbut-2-en-1-yl diphosphate synthase (flavodoxin) from Pasteurella multocida (strain Pm70).